The primary structure comprises 520 residues: Sensory neuron membrane protein 1 (520 aa).

The Cytoplasmic segment spans residues methionine 1 to lysine 5. Residues leucine 6 to proline 26 form a helical membrane-spanning segment. Residues proline 27 to serine 451 are Extracellular-facing. Residues asparagine 64, asparagine 224, and asparagine 268 are each glycosylated (N-linked (GlcNAc...) asparagine). 3 disulfides stabilise this stretch: cysteine 264/cysteine 329, cysteine 293/cysteine 348, and cysteine 331/cysteine 337. Residues isoleucine 452–alanine 472 form a helical membrane-spanning segment. Residues alanine 473 to aspartate 520 lie on the Cytoplasmic side of the membrane.

The protein belongs to the CD36 family.

It localises to the cell membrane. In terms of biological role, plays an olfactory role that is not restricted to pheromone sensitivity. In Apis mellifera (Honeybee), this protein is Sensory neuron membrane protein 1.